Consider the following 279-residue polypeptide: Tryptophan synthase alpha chain (279 aa).

Catalysis depends on proton acceptor residues E50 and D61.

Belongs to the TrpA family. In terms of assembly, tetramer of two alpha and two beta chains.

The catalysed reaction is (1S,2R)-1-C-(indol-3-yl)glycerol 3-phosphate + L-serine = D-glyceraldehyde 3-phosphate + L-tryptophan + H2O. It functions in the pathway amino-acid biosynthesis; L-tryptophan biosynthesis; L-tryptophan from chorismate: step 5/5. Functionally, the alpha subunit is responsible for the aldol cleavage of indoleglycerol phosphate to indole and glyceraldehyde 3-phosphate. In Mesorhizobium japonicum (strain LMG 29417 / CECT 9101 / MAFF 303099) (Mesorhizobium loti (strain MAFF 303099)), this protein is Tryptophan synthase alpha chain.